The chain runs to 538 residues: Glutamyl-tRNA(Gln) amidotransferase subunit B, mitochondrial (538 aa).

The protein belongs to the GatB/GatE family. GatB subfamily. In terms of assembly, subunit of the heterotrimeric GatCAB amidotransferase (AdT) complex, composed of A, B and C subunits.

Its subcellular location is the mitochondrion. It carries out the reaction L-glutamyl-tRNA(Gln) + L-glutamine + ATP + H2O = L-glutaminyl-tRNA(Gln) + L-glutamate + ADP + phosphate + H(+). Allows the formation of correctly charged Gln-tRNA(Gln) through the transamidation of misacylated Glu-tRNA(Gln) in the mitochondria. The reaction takes place in the presence of glutamine and ATP through an activated gamma-phospho-Glu-tRNA(Gln). The polypeptide is Glutamyl-tRNA(Gln) amidotransferase subunit B, mitochondrial (Dictyostelium discoideum (Social amoeba)).